A 114-amino-acid chain; its full sequence is NADH-ubiquinone oxidoreductase chain 3 (114 aa).

3 consecutive transmembrane segments (helical) span residues 3 to 23 (LITL…INTY), 52 to 72 (IQFF…VLLL), and 86 to 106 (TILL…YEWL).

It belongs to the complex I subunit 3 family.

The protein resides in the mitochondrion membrane. It catalyses the reaction a ubiquinone + NADH + 5 H(+)(in) = a ubiquinol + NAD(+) + 4 H(+)(out). Its function is as follows. Core subunit of the mitochondrial membrane respiratory chain NADH dehydrogenase (Complex I) that is believed to belong to the minimal assembly required for catalysis. Complex I functions in the transfer of electrons from NADH to the respiratory chain. The immediate electron acceptor for the enzyme is believed to be ubiquinone. The protein is NADH-ubiquinone oxidoreductase chain 3 (MT-ND3) of Lycodon semicarinatus (Ryukyu odd-tooth snake).